The sequence spans 217 residues: ATP phosphoribosyltransferase (217 aa).

It belongs to the ATP phosphoribosyltransferase family. Short subfamily. In terms of assembly, heteromultimer composed of HisG and HisZ subunits.

It localises to the cytoplasm. It catalyses the reaction 1-(5-phospho-beta-D-ribosyl)-ATP + diphosphate = 5-phospho-alpha-D-ribose 1-diphosphate + ATP. Its pathway is amino-acid biosynthesis; L-histidine biosynthesis; L-histidine from 5-phospho-alpha-D-ribose 1-diphosphate: step 1/9. Catalyzes the condensation of ATP and 5-phosphoribose 1-diphosphate to form N'-(5'-phosphoribosyl)-ATP (PR-ATP). Has a crucial role in the pathway because the rate of histidine biosynthesis seems to be controlled primarily by regulation of HisG enzymatic activity. The protein is ATP phosphoribosyltransferase of Burkholderia lata (strain ATCC 17760 / DSM 23089 / LMG 22485 / NCIMB 9086 / R18194 / 383).